The sequence spans 238 residues: Flagellar L-ring protein (238 aa).

Residues 1 to 16 (MNKAILAVAMVLLLAG) form the signal peptide. A lipid anchor (N-palmitoyl cysteine) is attached at C17. C17 carries the S-diacylglycerol cysteine lipid modification.

The protein belongs to the FlgH family. In terms of assembly, the basal body constitutes a major portion of the flagellar organelle and consists of four rings (L,P,S, and M) mounted on a central rod.

The protein resides in the cell outer membrane. The protein localises to the bacterial flagellum basal body. Assembles around the rod to form the L-ring and probably protects the motor/basal body from shearing forces during rotation. This Brucella canis (strain ATCC 23365 / NCTC 10854 / RM-666) protein is Flagellar L-ring protein.